The chain runs to 197 residues: Adenylate kinase (197 aa).

16–21 contributes to the ATP binding site; it reads GAGKGT. The tract at residues 36-65 is NMP; the sequence is STGDILRDHVARGTALGQRVKPILDAGQLV. Residues T37, R42, 63-65, 90-93, and Q97 each bind AMP; these read QLV and GFPR. Residues 131-147 form an LID region; that stretch reads ERGRQAALRGEPVRSDD. R132 is an ATP binding site. The AMP site is built by R144 and R155. G183 is an ATP binding site.

This sequence belongs to the adenylate kinase family. In terms of assembly, monomer.

The protein localises to the cytoplasm. The catalysed reaction is AMP + ATP = 2 ADP. It functions in the pathway purine metabolism; AMP biosynthesis via salvage pathway; AMP from ADP: step 1/1. In terms of biological role, catalyzes the reversible transfer of the terminal phosphate group between ATP and AMP. Plays an important role in cellular energy homeostasis and in adenine nucleotide metabolism. The polypeptide is Adenylate kinase (Deinococcus geothermalis (strain DSM 11300 / CIP 105573 / AG-3a)).